We begin with the raw amino-acid sequence, 153 residues long: uncharacterized protein (153 aa).

Transmembrane regions (helical) follow at residues 16 to 36 (ILAC…ILEI) and 97 to 117 (ALTT…CIIC).

The protein localises to the membrane. This is an uncharacterized protein from Human herpesvirus 6A (strain Uganda-1102) (HHV-6 variant A).